Reading from the N-terminus, the 1173-residue chain is MARYTQRPENALKRANEFIEVGKPLRALDTLQEVFRNKRWNYAYSETVIEPLMFKYLYLCVELKKSHIAKEGLFQYRNMFQLVNVNSLENVIRGYLKMAEEHTEAAQAQSSAAVAVLELDDLDNIATPESILMSAVCGEDAQDRSDRTILLPWVKFLWESYCQCLELLRVNTHCEALYHDIARMAFQFCLKYNRKSEFRRLCDKLRKHLEDICKSSNQTTGVSINKVETQQLCLDTRLYLLDSAIQMELWQEAYKAIEDIHGLMALSKKTPVPKTMANYYQKLAMVFSKAGNQLFHAAALLKLFQLTRELKKNLTKDDLQRMAAHVLLATLSIPLPSAHPEFDRFIEADKSPLEKAQKLAVLLGLPQPPTRVSLIREVVRLNVPQLVSEDFRNLYNWLEVDFNPLNLCKRIQSIVDIIETGPTETNLLSPYIQSLKDVTIMRLIRQISQVYESIEFKRLLELATFCNIFELEKLLVESVRHNDMQIRIDHQKNSIYFGTDLTESQREYRPDGPALQSMPSEQIRSQLVNMSTVLTRAVSIVYPNRERDQRAKLRTQMVHHYHEIKDREHQRILQRQKIIEDRKEYIEKQNNAREEEEARRQEEESRKAKLAEQKRLELEQEERERKRHQNEIQAIKEKSLKEKVQQISQTAHGKKMLSKLDEEGIKKLDAEQIAKRESEELQRERKELQSKLKSQEKKIDYYERAKRLEEIPLFEKYLAEKQVKDKEFWEATEKTRIENAIAERKDAVSQQERLKRMYPDRDEFLEALKKERASLYVEKLKKFEIALEAERKKRLADRVIRRREERRQAFLREKEEERLRKEEEIRLAQAAEERAAAEARRLEREAEDEKRRAQYEKQRAKEEEAERKIKEDRDRLAREVAVERERSDKERDTWRPRGGDRPSAAAAGGGGGAGEWRRAAAPIGDRNERAGDRIERGGERMERGGDRMERGGDRMERGGERTERGGDRMDRGGERMDRGGERGERGADRDRERRDNEGADSSWRVRREPDSQRGAGVKDASGSAAPPSRDDKWRRGGDRDRDRDRDFRNDGPRRDRDDRDDRDRGGFRRNDGPRRNDDAAPRETGGNWRDAPRQSDRDNRRPAGDRRDREVRGGDLRGPESRAPKEGGPSGGTGTAAGGGGNWRTAPGPRDEPAPKRDQPQDKGKFSLTPVQL.

Residues 319-502 (LQRMAAHVLL…NSIYFGTDLT (184 aa)) form the PCI domain. Disordered regions lie at residues 589–613 (QNNAREEEEARRQEEESRKAKLAEQ) and 836–1173 (AAEA…PVQL). Composition is skewed to basic and acidic residues over residues 836-900 (AAEA…RGGD), 925-1011 (DRNE…EPDS), 1028-1081 (SRDD…DAAP), and 1090-1125 (DAPRQSDRDNRRPAGDRRDREVRGGDLRGPESRAPK). The segment covering 1128 to 1142 (GPSGGTGTAAGGGGN) has biased composition (gly residues). The segment covering 1149–1165 (PRDEPAPKRDQPQDKGK) has biased composition (basic and acidic residues).

It belongs to the eIF-3 subunit A family. As to quaternary structure, component of the eukaryotic translation initiation factor 3 (eIF-3) complex. The eIF-3 complex interacts with pix.

The protein localises to the cytoplasm. In terms of biological role, RNA-binding component of the eukaryotic translation initiation factor 3 (eIF-3) complex, which is involved in protein synthesis of a specialized repertoire of mRNAs and, together with other initiation factors, stimulates binding of mRNA and methionyl-tRNAi to the 40S ribosome. The eIF-3 complex specifically targets and initiates translation of a subset of mRNAs involved in cell proliferation. This is Eukaryotic translation initiation factor 3 subunit A from Drosophila persimilis (Fruit fly).